Here is an 819-residue protein sequence, read N- to C-terminus: Plastid division protein CDP1, chloroplastic (819 aa).

A chloroplast-targeting transit peptide spans 1 to 76 (MPVAYTFPVL…NAAGGGIHVV (76 aa)). At 77–572 (DNAPSRTSSL…NKIWDEWLSQ (496 aa)) the chain is on the stromal side. Residues 419 to 439 (EAEALEKLKQLESNSDSAVRN) adopt a coiled-coil conformation. A helical membrane pass occupies residues 573–593 (SSLIGRVSVVALLGCTVFFSL). Topologically, residues 594–819 (KLSGIRSGRL…FCQSDIQIQK (226 aa)) are chloroplast intermembrane. Positions 762–782 (IAGEAAEIEALLEEAAELVDE) form a coiled coil.

In terms of assembly, self-interacts. Interacts (via N-terminus) with ARC3 (via MORN domains). Binds (via N-terminus) to FTSZ2 proteins, FTSZ2-1 and FTSZ2-2. Recruited ARC3 to the middle of the plastid where subsequent complex made of CDP1/PARC6, ARC3 and FtsZ proteins can form; this complex enhances the dynamics of Z rings during chloroplast division. Interacts (via C-terminus) with PDV1 (via C-terminus). Interacts with MIND1. As to expression, exclusively expressed in young green tissues such as young cotyledons, shoot apex, emerging leaves and budding inflorescence.

It is found in the plastid. The protein resides in the chloroplast inner membrane. Component of the plastid division machinery required for PDV1 localization to constriction sites. Involved in chloroplast division site placement. Required for the proper formation of FtsZ rings at the division site in nongreen plastids (e.g. etioplasts). Inhibits FtsZ assembly, functioning as an antagonistic regulator of FtsZ dynamics against ARC6, by recruiting ARC3 to the middle of the plastid to facilitate its interaction with FtsZ proteins. Required during stromule biogenesis in the leaf epidermis, especially in non-mesophyll cells plastids. The chain is Plastid division protein CDP1, chloroplastic from Arabidopsis thaliana (Mouse-ear cress).